The following is a 207-amino-acid chain: Protein GrpE (207 aa).

Residues 1 to 33 (MTDPNGPKDIPEQSAEAAEPVVSKPYIMPDDPE) are disordered.

It belongs to the GrpE family. In terms of assembly, homodimer.

The protein localises to the cytoplasm. Functionally, participates actively in the response to hyperosmotic and heat shock by preventing the aggregation of stress-denatured proteins, in association with DnaK and GrpE. It is the nucleotide exchange factor for DnaK and may function as a thermosensor. Unfolded proteins bind initially to DnaJ; upon interaction with the DnaJ-bound protein, DnaK hydrolyzes its bound ATP, resulting in the formation of a stable complex. GrpE releases ADP from DnaK; ATP binding to DnaK triggers the release of the substrate protein, thus completing the reaction cycle. Several rounds of ATP-dependent interactions between DnaJ, DnaK and GrpE are required for fully efficient folding. The protein is Protein GrpE of Rhodopseudomonas palustris (strain BisA53).